Reading from the N-terminus, the 245-residue chain is Alanyl-tRNA editing protein AlaX-M (245 aa).

Residues His107, His111, Cys210, and His214 each contribute to the Zn(2+) site.

It belongs to the class-II aminoacyl-tRNA synthetase family. Editing domain AlaX-M subfamily. The cofactor is Zn(2+).

Its subcellular location is the cytoplasm. In terms of biological role, functions in trans to edit the amino acid moiety from mischarged charged tRNA(Ala). This chain is Alanyl-tRNA editing protein AlaX-M (alaXM), found in Methanosarcina acetivorans (strain ATCC 35395 / DSM 2834 / JCM 12185 / C2A).